Reading from the N-terminus, the 88-residue chain is Small ribosomal subunit protein bS20 (88 aa).

2 disordered regions span residues 1–25 (MPNI…KAVK) and 68–88 (HKNQ…SLAA).

Belongs to the bacterial ribosomal protein bS20 family.

Its function is as follows. Binds directly to 16S ribosomal RNA. The chain is Small ribosomal subunit protein bS20 from Cutibacterium acnes (strain DSM 16379 / KPA171202) (Propionibacterium acnes).